The chain runs to 384 residues: Signal peptide peptidase-like 3 (384 aa).

Residues 1–8 are Lumenal-facing; that stretch reads MAEQTYSW. A helical transmembrane segment spans residues 9–29; the sequence is AYSLVDSSQVSTFLISILLIV. Residues 30–73 lie on the Cytoplasmic side of the membrane; it reads YGSFRSLNMDFENQDKEKDSNSSSGSFNGNSTNNSIQTIDSTQA. A helical transmembrane segment spans residues 74-94; the sequence is LFLPIGASVSLLVMFFFFDSV. Gln95 is a topological domain (lumenal). The helical transmembrane segment at 96-116 threads the bilayer; it reads VVFTICTAVLATIAFAFLLLP. Residues 117 to 138 are Cytoplasmic-facing; it reads MCQYLTRPCSPQNKISFGCCGR. Residues 139 to 159 traverse the membrane as a helical segment; sequence FTAAELLSFSLSVMLVLIWVL. The Lumenal portion of the chain corresponds to 160–164; it reads TGHWL. A helical transmembrane segment spans residues 165 to 185; that stretch reads LMDALAMGLCVAMIAFVRLPS. Residues 186-190 lie on the Cytoplasmic side of the membrane; that stretch reads LKVSC. Residues 191-211 traverse the membrane as a helical segment; that stretch reads LLLSGLLIYDVFWVFFSAYIF. Asp200 is an active-site residue. Topologically, residues 212-262 are lumenal; that stretch reads NSNVMVKVATQPADNPLDVLSRKLHLGPNVGRDVPRLSLPGKLVFPSSTGS. Residues 263-283 form a helical membrane-spanning segment; the sequence is HFSMLGIGDIVMPGLLLCFVL. Asp271 is an active-site residue. The Cytoplasmic portion of the chain corresponds to 284-311; that stretch reads RYDNYKKQASGDSCGAPGPANISGRMQK. A helical membrane pass occupies residues 312–332; sequence VSYFHCTLIGYFVGLLTATVA. The Lumenal portion of the chain corresponds to 333–339; sequence SRIHRAA. A helical transmembrane segment spans residues 340-360; it reads QPALLYLVPFTLLPLLTMAYL. The short motif at 341–343 is the PAL element; it reads PAL. Residues 361–384 are Cytoplasmic-facing; that stretch reads KGDLRRMWSEPFHSKSSSSRFLEV.

Belongs to the peptidase A22B family. In terms of assembly, monomer. Homodimer. Interacts with STIM1 (via transmembrane region and SOAR/CAD domain); the interaction promotes the binding of STIM1 to ORAI1. In terms of processing, not glycosylated.

It is found in the endoplasmic reticulum membrane. Its subcellular location is the golgi apparatus. The protein resides in the membrane. With respect to regulation, its proteolytic activity is blocked by a signal peptide peptidase (SPP) inhibitor, (ZLL)2-ketone (ZLL) or a gamma-secretase inhibitor, LY411,575. Intramembrane-cleaving aspartic protease (I-CLiP) that cleaves type II membrane protein substrates in or close to their luminal transmembrane domain boundaries. Acts like a sheddase by mediating the proteolytic release and secretion of active site-containing ectodomains of glycan-modifiying glycosidase and glycosyltransferase enzymes such as MGAT5, B4GAT1 and B4GALT1. Plays a role in the regulation of cellular glycosylation processes. Required to link T-cell antigen receptor (TCR) and calcineurin-NFAT signaling cascades in lymphocytes by promoting the association of STIM1 and ORAI1 during store-operated calcium entry (SOCE) in a protease-independent manner. The sequence is that of Signal peptide peptidase-like 3 from Mus musculus (Mouse).